Reading from the N-terminus, the 541-residue chain is Formimidoyltransferase-cyclodeaminase (541 aa).

Positions 1-181 (MSQLVECVPN…GATVTGARKF (181 aa)) are formiminotransferase N-subdomain. The For formimidoyltransferase activity role is filled by His82. 163 to 172 (GPSSFVPSWG) is a binding site for folate. The tract at residues 182 to 326 (LIAFNINLLS…PKERIIEYLV (145 aa)) is formiminotransferase C-subdomain. The linker stretch occupies residues 327-334 (PDSGPEQS). The segment at 335 to 541 (LLDTSLRGFV…VLGSLEARKE (207 aa)) is cyclodeaminase/cyclohydrolase. Asp412 functions as the For cyclodeaminase activity in the catalytic mechanism. Phosphoserine is present on Ser520.

It in the C-terminal section; belongs to the cyclodeaminase/cyclohydrolase family. This sequence in the N-terminal section; belongs to the formiminotransferase family. In terms of assembly, homooctamer, including four polyglutamate binding sites. The subunits are arranged as a tetramer of dimers, and form a planar ring-shaped structure.

The protein resides in the cytoplasm. It is found in the cytoskeleton. Its subcellular location is the microtubule organizing center. It localises to the centrosome. The protein localises to the centriole. The protein resides in the golgi apparatus. The catalysed reaction is 5-formimidoyltetrahydrofolate + L-glutamate = N-formimidoyl-L-glutamate + (6S)-5,6,7,8-tetrahydrofolate. It catalyses the reaction (6S)-5-formyl-5,6,7,8-tetrahydrofolate + L-glutamate = N-formyl-L-glutamate + (6S)-5,6,7,8-tetrahydrofolate + H(+). It carries out the reaction 5-formimidoyltetrahydrofolate + 2 H(+) = (6R)-5,10-methenyltetrahydrofolate + NH4(+). Its pathway is amino-acid degradation; L-histidine degradation into L-glutamate; L-glutamate from N-formimidoyl-L-glutamate (transferase route): step 1/1. The protein operates within one-carbon metabolism; tetrahydrofolate interconversion. Folate-dependent enzyme, that displays both transferase and deaminase activity. Serves to channel one-carbon units from formiminoglutamate to the folate pool. Functionally, binds and promotes bundling of vimentin filaments originating from the Golgi. This Mus musculus (Mouse) protein is Formimidoyltransferase-cyclodeaminase (Ftcd).